The sequence spans 278 residues: Orotidine 5'-phosphate decarboxylase (278 aa).

Lys-96 (proton donor) is an active-site residue.

This sequence belongs to the OMP decarboxylase family. Type 2 subfamily.

The enzyme catalyses orotidine 5'-phosphate + H(+) = UMP + CO2. It participates in pyrimidine metabolism; UMP biosynthesis via de novo pathway; UMP from orotate: step 2/2. This is Orotidine 5'-phosphate decarboxylase (pyrF) from Streptomyces coelicolor (strain ATCC BAA-471 / A3(2) / M145).